Here is a 215-residue protein sequence, read N- to C-terminus: MSVKNFMNNKKGDSGIGTLIVFIAMVLVAAVAASVLINTSGFLQQKAATTGKESTEQVASGLQVMGVNGYQDGTNDANVSKMAIYVTPNAGSSAIDLTNSKLFVTYDGQTHVLAYDDVTDLTTGNSDIFDAINVGTPASEFHVAVLQDNDNSTGNGVINKGDIVAIVIETSDIFGNDGIPERKSVSGKVQPEFGAPGVFEFTTPATYTNKVLELQ.

Positions 1–12 (MSVKNFMNNKKG) are excised as a propeptide.

Belongs to the archaeal flagellin family.

It is found in the archaeal flagellum. Functionally, flagellin is the subunit protein which polymerizes to form the filaments of archaeal flagella. In Methanococcus vannielii (strain ATCC 35089 / DSM 1224 / JCM 13029 / OCM 148 / SB), this protein is Flagellin B1 (flaB1).